The sequence spans 430 residues: KIN17-like protein (430 aa).

A C2H2-type zinc finger spans residues 28 to 50 (CQMCQKQCRDENGFKCHCMSESH). Positions 51–160 (QRQMQVFGQA…KARLKRKRIK (110 aa)) are winged helix-turn-helix (wHTH). The stretch at 147–183 (EQAVKARLKRKRIKSDLAEDERQERMIARQIERAQQS) forms a coiled coil. Residues 155–158 (KRKR) carry the Nuclear localization signal (NLS) motif. Disordered regions lie at residues 179–230 (RAQQ…ANKA) and 261–284 (EEEDEVSARDKEKEELAKKKGKDA). The span at 209–224 (EYSDSENDHEGQEEDA) shows a compositional bias: acidic residues. Positions 261–278 (EEEDEVSARDKEKEELAK) are enriched in basic and acidic residues. Residues 283 to 312 (DAINAAEARRSALDELMKEEEKAKERSNRK) adopt a coiled-coil conformation. The C-terminal subdomain A stretch occupies residues 319–370 (GIVVKVMSKSLAEKGYCKQKGVVKRVIDKYVGEIEMLESKHVLRVDQDELET). Residues 376 to 427 (GGLVRIVNGAYRGSNARLLSVDTERFCAKVQVEKGLYDGKVLKAIEYEDICK) are C-terminal subdomain B.

It belongs to the KIN17 family.

The protein resides in the nucleus. This chain is KIN17-like protein, found in Oryza sativa subsp. indica (Rice).